Here is a 136-residue protein sequence, read N- to C-terminus: Secreted RxLR effector protein 63 (136 aa).

An N-terminal signal peptide occupies residues 1 to 21; that stretch reads MQRFPYSLLLLLLSATNRSRR. Positions 43 to 46 match the RxLR motif; sequence RMLR.

The protein belongs to the RxLR effector family.

It is found in the secreted. The protein resides in the host nucleus. Its function is as follows. Effector that partially suppresses the tobacco programmed cell death induced by cell death-inducing proteins. The chain is Secreted RxLR effector protein 63 from Plasmopara viticola (Downy mildew of grapevine).